We begin with the raw amino-acid sequence, 372 residues long: Sulfate/thiosulfate import ATP-binding protein CysA (372 aa).

The 235-residue stretch at 3–237 folds into the ABC transporter domain; the sequence is IQVQHVTKRF…PATPFVYGFL (235 aa). 35-42 is an ATP binding site; that stretch reads GPSGCGKT.

It belongs to the ABC transporter superfamily. Sulfate/tungstate importer (TC 3.A.1.6) family. In terms of assembly, the complex is composed of two ATP-binding proteins (CysA), two transmembrane proteins (CysT and CysW) and a solute-binding protein (CysP).

It is found in the cell inner membrane. The enzyme catalyses sulfate(out) + ATP + H2O = sulfate(in) + ADP + phosphate + H(+). It catalyses the reaction thiosulfate(out) + ATP + H2O = thiosulfate(in) + ADP + phosphate + H(+). Its function is as follows. Part of the ABC transporter complex CysAWTP involved in sulfate/thiosulfate import. Responsible for energy coupling to the transport system. The chain is Sulfate/thiosulfate import ATP-binding protein CysA from Ralstonia nicotianae (strain ATCC BAA-1114 / GMI1000) (Ralstonia solanacearum).